The sequence spans 219 residues: Large ribosomal subunit protein bL25 (219 aa).

The disordered stretch occupies residues Val-176–Asp-219. A compositionally biased stretch (acidic residues) spans Glu-184–Asp-219.

This sequence belongs to the bacterial ribosomal protein bL25 family. CTC subfamily. As to quaternary structure, part of the 50S ribosomal subunit; part of the 5S rRNA/L5/L18/L25 subcomplex. Contacts the 5S rRNA. Binds to the 5S rRNA independently of L5 and L18.

In terms of biological role, this is one of the proteins that binds to the 5S RNA in the ribosome where it forms part of the central protuberance. This Staphylococcus epidermidis (strain ATCC 12228 / FDA PCI 1200) protein is Large ribosomal subunit protein bL25.